A 50-amino-acid polypeptide reads, in one-letter code: Gene 38 protein (50 aa).

This chain is Gene 38 protein (38), found in Mycobacterium (Mycobacteriophage D29).